We begin with the raw amino-acid sequence, 323 residues long: Elongation factor P--(R)-beta-lysine ligase (323 aa).

76–78 (SPE) provides a ligand contact to substrate. ATP contacts are provided by residues 100-102 (RNE) and Asn109. Tyr118 is a binding site for substrate. 242-243 (EL) is a binding site for ATP. Glu249 is a substrate binding site. Position 298 (Gly298) interacts with ATP.

This sequence belongs to the class-II aminoacyl-tRNA synthetase family. EpmA subfamily. As to quaternary structure, homodimer.

It carries out the reaction D-beta-lysine + L-lysyl-[protein] + ATP = N(6)-((3R)-3,6-diaminohexanoyl)-L-lysyl-[protein] + AMP + diphosphate + H(+). In terms of biological role, with EpmB is involved in the beta-lysylation step of the post-translational modification of translation elongation factor P (EF-P). Catalyzes the ATP-dependent activation of (R)-beta-lysine produced by EpmB, forming a lysyl-adenylate, from which the beta-lysyl moiety is then transferred to the epsilon-amino group of a conserved specific lysine residue in EF-P. This is Elongation factor P--(R)-beta-lysine ligase from Haemophilus influenzae (strain PittGG).